Consider the following 183-residue polypeptide: Ribosomal RNA small subunit methyltransferase G (183 aa).

S-adenosyl-L-methionine-binding positions include glycine 60, phenylalanine 65, isoleucine 111–glutamate 112, and arginine 125.

The protein belongs to the methyltransferase superfamily. RNA methyltransferase RsmG family.

The protein localises to the cytoplasm. The enzyme catalyses guanosine(527) in 16S rRNA + S-adenosyl-L-methionine = N(7)-methylguanosine(527) in 16S rRNA + S-adenosyl-L-homocysteine. Functionally, specifically methylates the N7 position of guanine in position 527 of 16S rRNA. This chain is Ribosomal RNA small subunit methyltransferase G, found in Campylobacter hominis (strain ATCC BAA-381 / DSM 21671 / CCUG 45161 / LMG 19568 / NCTC 13146 / CH001A).